The chain runs to 189 residues: Putative zinc finger protein ORF189 (189 aa).

The C2H2-type zinc finger occupies 114–137 (YVCPYCVSRFPTVRALKIHLKRRH).

This is Putative zinc finger protein ORF189 from Acidianus two-tailed virus (ATV).